The sequence spans 286 residues: Release factor glutamine methyltransferase (286 aa).

The S-adenosyl-L-methionine site is built by Asp148 and Asn194. 194–197 contributes to the substrate binding site; it reads NPPY.

The protein belongs to the protein N5-glutamine methyltransferase family. PrmC subfamily.

It catalyses the reaction L-glutaminyl-[peptide chain release factor] + S-adenosyl-L-methionine = N(5)-methyl-L-glutaminyl-[peptide chain release factor] + S-adenosyl-L-homocysteine + H(+). Functionally, methylates the class 1 translation termination release factors RF1/PrfA and RF2/PrfB on the glutamine residue of the universally conserved GGQ motif. This Leptospira interrogans serogroup Icterohaemorrhagiae serovar Lai (strain 56601) protein is Release factor glutamine methyltransferase.